A 462-amino-acid polypeptide reads, in one-letter code: L-seryl-tRNA(Sec) selenium transferase (462 aa).

Lys293 is modified (N6-(pyridoxal phosphate)lysine).

The protein belongs to the SelA family. The cofactor is pyridoxal 5'-phosphate.

It is found in the cytoplasm. The enzyme catalyses L-seryl-tRNA(Sec) + selenophosphate + H(+) = L-selenocysteinyl-tRNA(Sec) + phosphate. It functions in the pathway aminoacyl-tRNA biosynthesis; selenocysteinyl-tRNA(Sec) biosynthesis; selenocysteinyl-tRNA(Sec) from L-seryl-tRNA(Sec) (bacterial route): step 1/1. Its function is as follows. Converts seryl-tRNA(Sec) to selenocysteinyl-tRNA(Sec) required for selenoprotein biosynthesis. The sequence is that of L-seryl-tRNA(Sec) selenium transferase from Clostridium botulinum (strain ATCC 19397 / Type A).